The following is a 127-amino-acid chain: Large ribosomal subunit protein mL55 (127 aa).

The transit peptide at 1-32 (MPLAILLSLLRHCGVRAALPTPRHLHTSPWRA) directs the protein to the mitochondrion. A Phosphoserine modification is found at Ser84.

It belongs to the mitochondrion-specific ribosomal protein mL55 family. In terms of assembly, component of the mitochondrial ribosome large subunit (39S) which comprises a 16S rRNA and about 50 distinct proteins.

The protein resides in the mitochondrion. This Mus musculus (Mouse) protein is Large ribosomal subunit protein mL55 (Mrpl55).